The sequence spans 145 residues: Bacilliredoxin GK1781 (145 aa).

This sequence belongs to the bacilliredoxin family.

The protein is Bacilliredoxin GK1781 of Geobacillus kaustophilus (strain HTA426).